We begin with the raw amino-acid sequence, 161 residues long: 6,7-dimethyl-8-ribityllumazine synthase (161 aa).

5-amino-6-(D-ribitylamino)uracil-binding positions include Trp-26, 58–60 (SFE), and 81–83 (VVI). Residue 86-87 (GT) coordinates (2S)-2-hydroxy-3-oxobutyl phosphate. His-89 acts as the Proton donor in catalysis. Residue Phe-114 participates in 5-amino-6-(D-ribitylamino)uracil binding. Arg-128 serves as a coordination point for (2S)-2-hydroxy-3-oxobutyl phosphate.

It belongs to the DMRL synthase family.

The catalysed reaction is (2S)-2-hydroxy-3-oxobutyl phosphate + 5-amino-6-(D-ribitylamino)uracil = 6,7-dimethyl-8-(1-D-ribityl)lumazine + phosphate + 2 H2O + H(+). Its pathway is cofactor biosynthesis; riboflavin biosynthesis; riboflavin from 2-hydroxy-3-oxobutyl phosphate and 5-amino-6-(D-ribitylamino)uracil: step 1/2. Catalyzes the formation of 6,7-dimethyl-8-ribityllumazine by condensation of 5-amino-6-(D-ribitylamino)uracil with 3,4-dihydroxy-2-butanone 4-phosphate. This is the penultimate step in the biosynthesis of riboflavin. The sequence is that of 6,7-dimethyl-8-ribityllumazine synthase from Streptomyces avermitilis (strain ATCC 31267 / DSM 46492 / JCM 5070 / NBRC 14893 / NCIMB 12804 / NRRL 8165 / MA-4680).